The sequence spans 278 residues: Transmembrane protein 41B (278 aa).

The interval 1 to 31 (MQVHERSHTGGHTFQCNHGNEKKAPAAGKVH) is disordered. 6 helical membrane passes run 39–59 (MSLL…FLVY), 96–116 (FYVE…TFAI), 142–162 (CSGL…RPVV), 184–204 (LINY…FINI), 212–232 (PLKV…FVAI), and 249–269 (SWNS…PAIF). The VTT domain; required for its function in autophagy stretch occupies residues 127 to 238 (GFLYPFPLAL…FVAIKAGTTL (112 aa)).

This sequence belongs to the TMEM41 family.

It is found in the endoplasmic reticulum membrane. The protein resides in the endomembrane system. It catalyses the reaction a 1,2-diacyl-sn-glycero-3-phospho-L-serine(in) = a 1,2-diacyl-sn-glycero-3-phospho-L-serine(out). The catalysed reaction is cholesterol(in) = cholesterol(out). The enzyme catalyses a 1,2-diacyl-sn-glycero-3-phosphocholine(in) = a 1,2-diacyl-sn-glycero-3-phosphocholine(out). It carries out the reaction a 1,2-diacyl-sn-glycero-3-phosphoethanolamine(in) = a 1,2-diacyl-sn-glycero-3-phosphoethanolamine(out). Functionally, phospholipid scramblase involved in lipid homeostasis and membrane dynamics processes. Has phospholipid scramblase activity toward cholesterol and phosphatidylserine, as well as phosphatidylethanolamine and phosphatidylcholine. Required for autophagosome formation: participates in early stages of autophagosome biogenesis at the endoplasmic reticulum (ER) membrane by reequilibrating the leaflets of the ER as lipids are extracted by atg2 (atg2a or atg2b) to mediate autophagosome assembly. In addition to autophagy, involved in other processes in which phospholipid scramblase activity is required. Required for normal motor neuron development. The sequence is that of Transmembrane protein 41B from Xenopus laevis (African clawed frog).